Here is a 338-residue protein sequence, read N- to C-terminus: Phenylalanine--tRNA ligase alpha subunit (338 aa).

E253 contacts Mg(2+).

The protein belongs to the class-II aminoacyl-tRNA synthetase family. Phe-tRNA synthetase alpha subunit type 1 subfamily. Tetramer of two alpha and two beta subunits. Mg(2+) serves as cofactor.

Its subcellular location is the cytoplasm. It carries out the reaction tRNA(Phe) + L-phenylalanine + ATP = L-phenylalanyl-tRNA(Phe) + AMP + diphosphate + H(+). This Geotalea uraniireducens (strain Rf4) (Geobacter uraniireducens) protein is Phenylalanine--tRNA ligase alpha subunit.